A 55-amino-acid chain; its full sequence is uncharacterized protein (55 aa).

The chain crosses the membrane as a helical span at residues 27–47 (IFLIYHFSPIYCPYLFLFTVF).

It localises to the membrane. This is an uncharacterized protein from Acheta domesticus (House cricket).